A 93-amino-acid chain; its full sequence is Integration host factor subunit beta (93 aa).

This sequence belongs to the bacterial histone-like protein family. In terms of assembly, heterodimer of an alpha and a beta chain.

Its function is as follows. This protein is one of the two subunits of integration host factor, a specific DNA-binding protein that functions in genetic recombination as well as in transcriptional and translational control. This chain is Integration host factor subunit beta, found in Aliivibrio fischeri (strain ATCC 700601 / ES114) (Vibrio fischeri).